The sequence spans 922 residues: Protein translocase subunit SecA (922 aa).

ATP is bound by residues Gln-87, 105–109 (GEGKT), and Asp-516. Residues 867–912 (YTAPTETGEPETLPDPRTAGAGGDGLNLPEGVRIGRNDPCPCGSGK) are disordered. Cys-906, Cys-908, Cys-917, and His-918 together coordinate Zn(2+).

The protein belongs to the SecA family. As to quaternary structure, monomer and homodimer. Part of the essential Sec protein translocation apparatus which comprises SecA, SecYEG and auxiliary proteins SecDF-YajC and YidC. Requires Zn(2+) as cofactor.

It localises to the cell inner membrane. The protein localises to the cytoplasm. The catalysed reaction is ATP + H2O + cellular proteinSide 1 = ADP + phosphate + cellular proteinSide 2.. In terms of biological role, part of the Sec protein translocase complex. Interacts with the SecYEG preprotein conducting channel. Has a central role in coupling the hydrolysis of ATP to the transfer of proteins into and across the cell membrane, serving both as a receptor for the preprotein-SecB complex and as an ATP-driven molecular motor driving the stepwise translocation of polypeptide chains across the membrane. This chain is Protein translocase subunit SecA, found in Paracidovorax citrulli (strain AAC00-1) (Acidovorax citrulli).